The following is a 228-amino-acid chain: 2-C-methyl-D-erythritol 4-phosphate cytidylyltransferase (228 aa).

It belongs to the IspD/TarI cytidylyltransferase family. IspD subfamily.

It catalyses the reaction 2-C-methyl-D-erythritol 4-phosphate + CTP + H(+) = 4-CDP-2-C-methyl-D-erythritol + diphosphate. It functions in the pathway isoprenoid biosynthesis; isopentenyl diphosphate biosynthesis via DXP pathway; isopentenyl diphosphate from 1-deoxy-D-xylulose 5-phosphate: step 2/6. In terms of biological role, catalyzes the formation of 4-diphosphocytidyl-2-C-methyl-D-erythritol from CTP and 2-C-methyl-D-erythritol 4-phosphate (MEP). The chain is 2-C-methyl-D-erythritol 4-phosphate cytidylyltransferase from Actinobacillus pleuropneumoniae serotype 5b (strain L20).